The chain runs to 564 residues: MFS-type efflux transporter ffsH (564 aa).

The span at 1 to 18 shows a compositional bias: basic and acidic residues; that stretch reads MSEAEKKASQDAQHKEPM. The interval 1–37 is disordered; that stretch reads MSEAEKKASQDAQHKEPMADSETQLDSDSAPSSQAEK. Positions 21 to 35 are enriched in polar residues; the sequence is SETQLDSDSAPSSQA. Transmembrane regions (helical) follow at residues 43-63, 98-118, 131-151, and 157-177; these read YPLSFWLAFGALCLTGLISAM, YVMILATAIFLLGSGICGGAN, GIGAGGINMLVDLIICDLVPM, and FIGLLFLFVSIGTTSGPIIGG. The N-linked (GlcNAc...) asparagine glycan is linked to asparagine 182. 9 helical membrane passes run 187-207, 226-246, 254-274, 300-320, 334-354, 362-382, 389-409, 427-447, and 502-522; these read WVFYINLPMGGAALVLLVLFL, VVGNAILVGATFSILYALTYG, AANIVAPFVLGFVGLGIFIAW, FFISFMTMILAFWVVYFYPVY, VHLLPFEVSFPIFAAVGGGLV, PIHMVATSIVTIAIGASSVLT, AWAVLQIFIGMGLGSLISTTL, TWAYMRSLGTIWGVSVPAAIF, and VWLVSIAFGAVTVLSTLFEKE. The disordered stretch occupies residues 540 to 564; it reads GDAKGDVERGEGQNDSREGGQNENV. The N-linked (GlcNAc...) asparagine glycan is linked to asparagine 553.

Belongs to the major facilitator superfamily.

The protein resides in the cell membrane. Its function is as follows. MFS-type efflux transporter; part of the gene cluster that mediates the biosynthesis of the cytotoxic leucine-containing cytochalasans, including aspochalasin C, aspochalasin E, TMC-169, flavichalasine F, aspergillin PZ, aspochalasin M and flavichalasine G. FfsH might be involved in the excretion of cytochalasans. The protein is MFS-type efflux transporter ffsH of Aspergillus flavipes.